A 312-amino-acid polypeptide reads, in one-letter code: Acetaldehyde dehydrogenase 2 (312 aa).

11-14 contacts NAD(+); it reads SGNI. The Acyl-thioester intermediate role is filled by Cys129. NAD(+)-binding positions include 160–168 and Asn287; that span reads SAGPGTRAN.

This sequence belongs to the acetaldehyde dehydrogenase family.

It catalyses the reaction acetaldehyde + NAD(+) + CoA = acetyl-CoA + NADH + H(+). The sequence is that of Acetaldehyde dehydrogenase 2 from Novosphingobium aromaticivorans (strain ATCC 700278 / DSM 12444 / CCUG 56034 / CIP 105152 / NBRC 16084 / F199).